Reading from the N-terminus, the 182-residue chain is Plasmolipin (182 aa).

The tract at residues Met-1–Gly-20 is disordered. The Cytoplasmic portion of the chain corresponds to Met-1–Ser-35. Polar residues predominate over residues Lys-7–Ala-16. Ser-9 carries the phosphoserine modification. An MARVEL domain is found at Phe-32 to Arg-166. Residues Ala-36 to Ala-56 traverse the membrane as a helical segment. The Extracellular portion of the chain corresponds to Asp-57 to Trp-68. A helical transmembrane segment spans residues Val-69 to Phe-89. The Cytoplasmic portion of the chain corresponds to Gln-90–Pro-99. Residues Trp-100–Val-120 traverse the membrane as a helical segment. Residues Ala-121–Ser-141 lie on the Extracellular side of the membrane. Residues Ala-142–Phe-162 form a helical membrane-spanning segment. Over Gln-163 to Ser-182 the chain is Cytoplasmic.

The protein belongs to the MAL family. Forms oligomers. Phosphorylated. In terms of tissue distribution, detected to the sciatic nerve, brain and kidney. In the sciatic nerve, found in Schwann cells; in the brain, in developing oligodendrocytes, especially of the corpus callosum, of cortical white matter, in the optic nerve and in the stratum radiatum and stratum oriens of the hippocampus. In kidney, segregated to the apical surface of renal tubular epithelia.

The protein resides in the cell membrane. The protein localises to the myelin membrane. Its subcellular location is the apical cell membrane. In terms of biological role, main component of the myelin sheath that plays an important role in myelin membrane biogenesis and myelination. Plays an essential function in apical endocytosis. Regulates epithelial development through the regulation of apical endocytosis. Part of the intracellular machinery that mediates basolateral-to-apical transport of ICAM-1, an essential adhesion receptor in epithelial cells, from the subapical compartment in hepatic epithelial cells. This is Plasmolipin (Pllp) from Rattus norvegicus (Rat).